A 283-amino-acid polypeptide reads, in one-letter code: ATP phosphoribosyltransferase (283 aa).

This sequence belongs to the ATP phosphoribosyltransferase family. Long subfamily. The cofactor is Mg(2+).

The protein localises to the cytoplasm. The enzyme catalyses 1-(5-phospho-beta-D-ribosyl)-ATP + diphosphate = 5-phospho-alpha-D-ribose 1-diphosphate + ATP. The protein operates within amino-acid biosynthesis; L-histidine biosynthesis; L-histidine from 5-phospho-alpha-D-ribose 1-diphosphate: step 1/9. With respect to regulation, feedback inhibited by histidine. Catalyzes the condensation of ATP and 5-phosphoribose 1-diphosphate to form N'-(5'-phosphoribosyl)-ATP (PR-ATP). Has a crucial role in the pathway because the rate of histidine biosynthesis seems to be controlled primarily by regulation of HisG enzymatic activity. The protein is ATP phosphoribosyltransferase of Rhodococcus erythropolis (strain PR4 / NBRC 100887).